A 502-amino-acid polypeptide reads, in one-letter code: L-amino-acid oxidase BmooLAAO-I (502 aa).

The signal sequence occupies residues 1 to 18 (MNVFFTFSLLFLAALGSC). Residues Cys28 and Cys191 are joined by a disulfide bond. Residues 61-62 (MS), 81-82 (EA), Arg89, and 105-108 (GPMR) each bind FAD. Arg108 is a binding site for substrate. Residue Asn190 is glycosylated (N-linked (GlcNAc...) asparagine). His241 contacts substrate. Val279 is an FAD binding site. The cysteines at positions 349 and 430 are disulfide-linked. Substrate is bound at residue Tyr390. FAD is bound by residues Glu475 and 482–487 (GWIDST). 482–483 (GW) serves as a coordination point for substrate.

It belongs to the flavin monoamine oxidase family. FIG1 subfamily. Homodimer; non-covalently linked. FAD is required as a cofactor. In terms of processing, N-glycosylated. The enzymatic activity is not affected by deglycosylation. Expressed by the venom gland.

It localises to the secreted. It carries out the reaction an L-alpha-amino acid + O2 + H2O = a 2-oxocarboxylate + H2O2 + NH4(+). The catalysed reaction is L-leucine + O2 + H2O = 4-methyl-2-oxopentanoate + H2O2 + NH4(+). The enzyme catalyses L-phenylalanine + O2 + H2O = 3-phenylpyruvate + H2O2 + NH4(+). It catalyses the reaction L-tryptophan + O2 + H2O = indole-3-pyruvate + H2O2 + NH4(+). It carries out the reaction L-methionine + O2 + H2O = 4-methylsulfanyl-2-oxobutanoate + H2O2 + NH4(+). The catalysed reaction is L-isoleucine + O2 + H2O = (S)-3-methyl-2-oxopentanoate + H2O2 + NH4(+). The enzyme catalyses L-histidine + O2 + H2O = 3-(imidazol-5-yl)pyruvate + H2O2 + NH4(+). It catalyses the reaction L-tyrosine + O2 + H2O = 3-(4-hydroxyphenyl)pyruvate + H2O2 + NH4(+). It carries out the reaction L-alanine + O2 + H2O = pyruvate + H2O2 + NH4(+). The catalysed reaction is L-valine + O2 + H2O = 3-methyl-2-oxobutanoate + H2O2 + NH4(+). Its enzymatic activities is reduced when it is exposed to Ca(2+), Zn(2+), Al(3+), Cu(2+) or Ni(2+) salts. Functionally, catalyzes an oxidative deamination of predominantly hydrophobic and aromatic L-amino acids, thus producing hydrogen peroxide that may contribute to the toxicity of the venom. Shows very high activity on L-Met, and L-Leu, high activity on L-Ile, L-Phe and L-Tyr and moderate activity on L-His, L-Val and L-Ala. Exhibits diverse biological activities, such as edema, apoptosis of tumor cell lines, antibacterial activities against both Gram-positive and Gram-negative bacteria, as well as induction of platelet aggregation. Effects of snake L-amino oxidases on platelets are controversial, since they either induce aggregation or inhibit agonist-induced aggregation. These different effects are probably due to different experimental conditions. Unlike other snake venom L-amino acid oxidases, does not induce hemorrhage. It may also induce hemolysis. Has parasiticidal activities against and leishmania, as a result of enzyme-catalyzed hydrogen peroxide production. The protein is L-amino-acid oxidase BmooLAAO-I of Bothrops moojeni (Lance-headed viper).